The sequence spans 286 residues: Putative thiosulfate sulfurtransferase (286 aa).

The Rhodanese 1 domain maps to 27-134; that stretch reads DDPAYRLVEV…WVDNDYPTTD (108 aa). Glycyl lysine isopeptide (Lys-Gly) (interchain with G-Cter in SAMP2) cross-links involve residues Lys162 and Lys166. The Rhodanese 2 domain maps to 164-283; it reads VDKGLPLVDV…WGNLVGAPVE (120 aa). Residue Cys242 is the Cysteine persulfide intermediate of the active site. Residue Arg247 coordinates substrate.

The catalysed reaction is thiosulfate + hydrogen cyanide = thiocyanate + sulfite + 2 H(+). May be a sulfotransferase involved in the formation of thiosulfate. This chain is Putative thiosulfate sulfurtransferase (tssA), found in Haloferax volcanii (strain ATCC 29605 / DSM 3757 / JCM 8879 / NBRC 14742 / NCIMB 2012 / VKM B-1768 / DS2) (Halobacterium volcanii).